The following is a 495-amino-acid chain: MRCIGISNRDFVEGVSGGSWVDIVLEHGSCVTTMAKNKPTLDFEVIKTEAKQPATLRKSCFEAKLTNTTTESRCPTLGEPSLNEEQDKRLVCKHSMVDRGWGNGCGLFGKGGIVTCAMFTCKKNMEGKFVHPENLEYTIVITPHSGEEHAVGNDTGKHGKELKITPQSSITEAELTGYGTVTMQCSPRTGLDFNEIVLLQMEDKAWLVHRQWFLDLPLPWLPGADTQGSNWIQKETLVTFKNPHAKKQDVVVLGSQEGAMQTALTGAAEIQMSSGNLLFTGHLKCRLRMDKLQLKGISYSMCTGKFKIVKEFAETQHGTIVIRVQYEGDGSPCKIPFEIIDLEKRHVLGCLITVYPIVTEKDSPVNIEADPPFGDSYIIIGIEPGQLKLHWLKKGSSIGQMFETTMRGAKRMAILGDTAWDFGSLGGVFTSIGKALNQVFGTIYGAAFSGVSWTMKILIGVIITCIGMNSRSTSLSVSLVLVGVVTLYLGGMVHA.

The Extracellular segment spans residues 1 to 445 (MRCIGISNRD…LNQVFGTIYG (445 aa)). 4 cysteine pairs are disulfide-bonded: Cys3/Cys30, Cys60/Cys121, Cys74/Cys105, and Cys92/Cys116. The N-linked (GlcNAc...) asparagine; by host glycan is linked to Asn67. Residues 98 to 111 (DRGWGNGCGLFGKG) are fusion peptide. Asn153 carries N-linked (GlcNAc...) asparagine; by host glycosylation. Cystine bridges form between Cys185–Cys285 and Cys302–Cys333. Residues 446–466 (AAFSGVSWTMKILIGVIITCI) form a helical membrane-spanning segment. Topologically, residues 467-472 (GMNSRS) are cytoplasmic. A helical transmembrane segment spans residues 473-493 (TSLSVSLVLVGVVTLYLGGMV). Over 494–495 (HA) the chain is Extracellular.

In terms of assembly, homodimer; in the endoplasmic reticulum and Golgi. Interacts with protein prM. Interacts with non-structural protein 1. In terms of processing, N-glycosylated. Post-translationally, specific enzymatic cleavages in vivo yield mature proteins. Cleavages in the lumen of endoplasmic reticulum are performed by host signal peptidase, wereas cleavages in the cytoplasmic side are performed by serine protease NS3. Signal cleavage at the 2K-4B site requires a prior NS3 protease-mediated cleavage at the 4A-2K site.

Its subcellular location is the virion membrane. It is found in the host endoplasmic reticulum membrane. Functionally, binds to host cell surface receptor and mediates fusion between viral and cellular membranes. Envelope protein is synthesized in the endoplasmic reticulum in the form of heterodimer with protein prM. They play a role in virion budding in the ER, and the newly formed immature particle is covered with 60 spikes composed of heterodimer between precursor prM and envelope protein E. The virion is transported to the Golgi apparatus where the low pH causes dissociation of PrM-E heterodimers and formation of E homodimers. prM-E cleavage is inefficient, and many virions are only partially matured. These uncleaved prM would play a role in immune evasion. In Aedes aegypti (Yellowfever mosquito), this protein is Genome polyprotein.